The sequence spans 692 residues: Eomesodermin (692 aa).

Positions 35 to 135 are disordered; the sequence is NSSTPNLPHT…LNTAVPTSAP (101 aa). The segment at residues 263 to 443 is a DNA-binding region (T-box); it reads LWLKFHRHQT…HNPFAKGFRD (181 aa). Residues 578–692 form a required for transcription activation region; it reads SMAGWGSRGS…LGYYSFYSSS (115 aa). Disordered stretches follow at residues 595-614 and 621-673; these read TSLP…DLLP and EMSS…DIGT. Composition is skewed to low complexity over residues 596–609 and 654–665; these read SLPW…SGFS and SPSTSSNENSPP.

The protein resides in the nucleus. Functions as a transcriptional activator playing a crucial role during development. Functions in gastrulation, regulating mesoderm differentiation. Activates wnt8, t/bra, chrd and mix-A/mix.1 expression. This is Eomesodermin (eomes) from Xenopus laevis (African clawed frog).